Reading from the N-terminus, the 97-residue chain is Putative membrane protein insertion efficiency factor (97 aa).

The tract at residues 72–97 is disordered; that stretch reads VPGAEPDQEQHQCTPLCNHHSEDHSQ.

The protein belongs to the UPF0161 family.

Its subcellular location is the cell inner membrane. In terms of biological role, could be involved in insertion of integral membrane proteins into the membrane. The sequence is that of Putative membrane protein insertion efficiency factor from Alcanivorax borkumensis (strain ATCC 700651 / DSM 11573 / NCIMB 13689 / SK2).